Reading from the N-terminus, the 191-residue chain is Holliday junction branch migration complex subunit RuvA (191 aa).

Residues 1–64 (MIGRITGTLA…EDAHLLYGFG (64 aa)) are domain I. A domain II region spans residues 65-138 (SEVERAAFRE…KGKPVFAGAL (74 aa)). The flexible linker stretch occupies residues 138-141 (LASV). The interval 142–191 (PSAGASDDVRQALLALGYNERETAATVRELPAGLAVGEAIRQALRALSRA) is domain III.

This sequence belongs to the RuvA family. As to quaternary structure, homotetramer. Forms an RuvA(8)-RuvB(12)-Holliday junction (HJ) complex. HJ DNA is sandwiched between 2 RuvA tetramers; dsDNA enters through RuvA and exits via RuvB. An RuvB hexamer assembles on each DNA strand where it exits the tetramer. Each RuvB hexamer is contacted by two RuvA subunits (via domain III) on 2 adjacent RuvB subunits; this complex drives branch migration. In the full resolvosome a probable DNA-RuvA(4)-RuvB(12)-RuvC(2) complex forms which resolves the HJ.

It localises to the cytoplasm. Functionally, the RuvA-RuvB-RuvC complex processes Holliday junction (HJ) DNA during genetic recombination and DNA repair, while the RuvA-RuvB complex plays an important role in the rescue of blocked DNA replication forks via replication fork reversal (RFR). RuvA specifically binds to HJ cruciform DNA, conferring on it an open structure. The RuvB hexamer acts as an ATP-dependent pump, pulling dsDNA into and through the RuvAB complex. HJ branch migration allows RuvC to scan DNA until it finds its consensus sequence, where it cleaves and resolves the cruciform DNA. The sequence is that of Holliday junction branch migration complex subunit RuvA from Thiobacillus denitrificans (strain ATCC 25259 / T1).